The primary structure comprises 333 residues: Adenosine deaminase (333 aa).

The Zn(2+) site is built by His12 and His14. Positions 14, 16, and 170 each coordinate substrate. His197 is a Zn(2+) binding site. Glu200 (proton donor) is an active-site residue. Asp278 contacts Zn(2+). A substrate-binding site is contributed by Asp279.

It belongs to the metallo-dependent hydrolases superfamily. Adenosine and AMP deaminases family. Adenosine deaminase subfamily. Requires Zn(2+) as cofactor.

The enzyme catalyses adenosine + H2O + H(+) = inosine + NH4(+). The catalysed reaction is 2'-deoxyadenosine + H2O + H(+) = 2'-deoxyinosine + NH4(+). Catalyzes the hydrolytic deamination of adenosine and 2-deoxyadenosine. This chain is Adenosine deaminase, found in Aliivibrio fischeri (strain ATCC 700601 / ES114) (Vibrio fischeri).